The following is a 707-amino-acid chain: Ribosomal RNA large subunit methyltransferase K/L (707 aa).

Positions 44–155 (VIYNLCLWSR…NDILTVSFDL (112 aa)) constitute a THUMP domain.

It belongs to the methyltransferase superfamily. RlmKL family.

The protein localises to the cytoplasm. It carries out the reaction guanosine(2445) in 23S rRNA + S-adenosyl-L-methionine = N(2)-methylguanosine(2445) in 23S rRNA + S-adenosyl-L-homocysteine + H(+). The catalysed reaction is guanosine(2069) in 23S rRNA + S-adenosyl-L-methionine = N(2)-methylguanosine(2069) in 23S rRNA + S-adenosyl-L-homocysteine + H(+). Its function is as follows. Specifically methylates the guanine in position 2445 (m2G2445) and the guanine in position 2069 (m7G2069) of 23S rRNA. The protein is Ribosomal RNA large subunit methyltransferase K/L of Legionella pneumophila subsp. pneumophila (strain Philadelphia 1 / ATCC 33152 / DSM 7513).